The chain runs to 200 residues: Putative 3-methyladenine DNA glycosylase (200 aa).

This sequence belongs to the DNA glycosylase MPG family.

The sequence is that of Putative 3-methyladenine DNA glycosylase from Methanocella arvoryzae (strain DSM 22066 / NBRC 105507 / MRE50).